Consider the following 395-residue polypeptide: HORMA domain-containing protein 1 (395 aa).

The HORMA domain maps to 24-226 (QQSLVLVKRL…TPFHTFKVKV (203 aa)). The tract at residues 329–395 (DVSESKTRSG…RKFSEPKEYV (67 aa)) is disordered. Polar residues predominate over residues 344 to 353 (KMANGNQPVK). The segment covering 354-363 (SSKENRKRNQ) has biased composition (basic and acidic residues). Ser-377 carries the post-translational modification Phosphoserine. Residues 384–387 (KRRK) carry the Nuclear localization signal motif.

In terms of assembly, interacts with HORMAD2. Interacts with IHO1. Phosphorylated at Ser-378 in a SPO11-dependent manner.

It localises to the nucleus. Its subcellular location is the chromosome. Plays a key role in meiotic progression. Regulates 3 different functions during meiosis: ensures that sufficient numbers of processed DNA double-strand breaks (DSBs) are available for successful homology search by increasing the steady-state numbers of single-stranded DSB ends. Promotes synaptonemal-complex formation independently of its role in homology search. Plays a key role in the male mid-pachytene checkpoint and the female meiotic prophase checkpoint: required for efficient build-up of ATR activity on unsynapsed chromosome regions, a process believed to form the basis of meiotic silencing of unsynapsed chromatin (MSUC) and meiotic prophase quality control in both sexes. The protein is HORMA domain-containing protein 1 (HORMAD1) of Canis lupus familiaris (Dog).